Consider the following 180-residue polypeptide: ATP-dependent protease subunit HslV (180 aa).

Residue Thr-5 is part of the active site. Na(+) is bound by residues Gly-161, Cys-164, and Thr-167.

Belongs to the peptidase T1B family. HslV subfamily. As to quaternary structure, a double ring-shaped homohexamer of HslV is capped on each side by a ring-shaped HslU homohexamer. The assembly of the HslU/HslV complex is dependent on binding of ATP.

It is found in the cytoplasm. The enzyme catalyses ATP-dependent cleavage of peptide bonds with broad specificity.. Its activity is regulated as follows. Allosterically activated by HslU binding. Functionally, protease subunit of a proteasome-like degradation complex believed to be a general protein degrading machinery. The sequence is that of ATP-dependent protease subunit HslV from Campylobacter jejuni subsp. jejuni serotype O:2 (strain ATCC 700819 / NCTC 11168).